The chain runs to 455 residues: Bifunctional protein GlmU (455 aa).

The segment at 1 to 226 is pyrophosphorylase; that stretch reads MSLEIVILAA…PMEVQGANDR (226 aa). UDP-N-acetyl-alpha-D-glucosamine-binding positions include 8 to 11, lysine 22, glutamine 73, 78 to 79, 99 to 101, glycine 136, glutamate 151, asparagine 166, and asparagine 224; these read LAAG, GT, and YGD. Aspartate 101 contributes to the Mg(2+) binding site. Asparagine 224 contacts Mg(2+). Positions 227-247 are linker; the sequence is KQLSELERHYQLRAGRRLMAQ. The segment at 248–455 is N-acetyltransferase; it reads GVTLRDPARF…WKRPEKIKKN (208 aa). UDP-N-acetyl-alpha-D-glucosamine is bound by residues arginine 330 and lysine 348. Residue histidine 360 is the Proton acceptor of the active site. 2 residues coordinate UDP-N-acetyl-alpha-D-glucosamine: tyrosine 363 and asparagine 374. Acetyl-CoA contacts are provided by residues alanine 377, 383–384, serine 402, alanine 420, and arginine 437; that span reads NY.

This sequence in the N-terminal section; belongs to the N-acetylglucosamine-1-phosphate uridyltransferase family. It in the C-terminal section; belongs to the transferase hexapeptide repeat family. Homotrimer. Mg(2+) is required as a cofactor.

It is found in the cytoplasm. It carries out the reaction alpha-D-glucosamine 1-phosphate + acetyl-CoA = N-acetyl-alpha-D-glucosamine 1-phosphate + CoA + H(+). The catalysed reaction is N-acetyl-alpha-D-glucosamine 1-phosphate + UTP + H(+) = UDP-N-acetyl-alpha-D-glucosamine + diphosphate. It functions in the pathway nucleotide-sugar biosynthesis; UDP-N-acetyl-alpha-D-glucosamine biosynthesis; N-acetyl-alpha-D-glucosamine 1-phosphate from alpha-D-glucosamine 6-phosphate (route II): step 2/2. The protein operates within nucleotide-sugar biosynthesis; UDP-N-acetyl-alpha-D-glucosamine biosynthesis; UDP-N-acetyl-alpha-D-glucosamine from N-acetyl-alpha-D-glucosamine 1-phosphate: step 1/1. It participates in bacterial outer membrane biogenesis; LPS lipid A biosynthesis. Functionally, catalyzes the last two sequential reactions in the de novo biosynthetic pathway for UDP-N-acetylglucosamine (UDP-GlcNAc). The C-terminal domain catalyzes the transfer of acetyl group from acetyl coenzyme A to glucosamine-1-phosphate (GlcN-1-P) to produce N-acetylglucosamine-1-phosphate (GlcNAc-1-P), which is converted into UDP-GlcNAc by the transfer of uridine 5-monophosphate (from uridine 5-triphosphate), a reaction catalyzed by the N-terminal domain. The sequence is that of Bifunctional protein GlmU from Pseudomonas fluorescens (strain Pf0-1).